Here is a 949-residue protein sequence, read N- to C-terminus: Isoleucine--tRNA ligase (949 aa).

The 'HIGH' region motif lies at 58 to 68 (PYANGDIHIGH). L-isoleucyl-5'-AMP is bound at residue E567. A 'KMSKS' region motif is present at residues 608–612 (KMSKS). An ATP-binding site is contributed by K611. Zn(2+)-binding residues include C912, C915, C932, and C935.

Belongs to the class-I aminoacyl-tRNA synthetase family. IleS type 1 subfamily. As to quaternary structure, monomer. Requires Zn(2+) as cofactor.

The protein resides in the cytoplasm. The catalysed reaction is tRNA(Ile) + L-isoleucine + ATP = L-isoleucyl-tRNA(Ile) + AMP + diphosphate. Functionally, catalyzes the attachment of isoleucine to tRNA(Ile). As IleRS can inadvertently accommodate and process structurally similar amino acids such as valine, to avoid such errors it has two additional distinct tRNA(Ile)-dependent editing activities. One activity is designated as 'pretransfer' editing and involves the hydrolysis of activated Val-AMP. The other activity is designated 'posttransfer' editing and involves deacylation of mischarged Val-tRNA(Ile). This is Isoleucine--tRNA ligase from Vibrio cholerae serotype O1 (strain ATCC 39315 / El Tor Inaba N16961).